Reading from the N-terminus, the 137-residue chain is NTF2-related export protein (137 aa).

Positions 19-135 (ESKKFMDVYY…YKVKSDRFRY (117 aa)) constitute an NTF2 domain.

In terms of assembly, preferentially binds Ran-GTP.

Its subcellular location is the nucleus. In terms of biological role, stimulator of protein export for NES-containing proteins. Also plays a role in the nuclear export of U1 snRNA, tRNA, and mRNA. The chain is NTF2-related export protein (nxt-1) from Caenorhabditis elegans.